Consider the following 63-residue polypeptide: Megourin-1 (63 aa).

In terms of assembly, monomer. In terms of processing, contains four disulfide bonds.

Its subcellular location is the secreted. Functionally, has antimicrobial activity against Gram-positive bacteria and fungi. The polypeptide is Megourin-1 (Megoura viciae (Vetch aphid)).